Here is a 229-residue protein sequence, read N- to C-terminus: Aminodeoxyfutalosine nucleosidase (229 aa).

E13 serves as the catalytic Proton acceptor. Substrate-binding positions include G79, I153, and 173-174; that span reads ME. Catalysis depends on D197, which acts as the Proton donor.

This sequence belongs to the PNP/UDP phosphorylase family. As to quaternary structure, homodimer.

It carries out the reaction 6-amino-6-deoxyfutalosine + H2O = dehypoxanthine futalosine + adenine. It catalyses the reaction S-adenosyl-L-homocysteine + H2O = S-(5-deoxy-D-ribos-5-yl)-L-homocysteine + adenine. The enzyme catalyses S-methyl-5'-thioadenosine + H2O = 5-(methylsulfanyl)-D-ribose + adenine. The catalysed reaction is 5'-deoxyadenosine + H2O = 5-deoxy-D-ribose + adenine. Its pathway is quinol/quinone metabolism; menaquinone biosynthesis. It functions in the pathway amino-acid biosynthesis; L-methionine biosynthesis via salvage pathway; S-methyl-5-thio-alpha-D-ribose 1-phosphate from S-methyl-5'-thioadenosine (hydrolase route): step 1/2. Its function is as follows. Catalyzes the direct conversion of aminodeoxyfutalosine (AFL) into dehypoxanthine futalosine (DHFL) and adenine via the hydrolysis of the N-glycosidic bond; this reaction seems to represent an essential step in the menaquinone biosynthesis pathway in Campylobacter species. Also catalyzes the hydrolysis of 5'-methylthioadenosine (MTA) to adenine and 5'-methylthioribose. Can also probably use S-adenosylhomocysteine (SAH) as substrate, leading to adenine and S-ribosylhomocysteine. These other activities highlight the tremendous versatility of the enzyme, which also plays key roles in S-adenosylmethionine recycling and in the biosynthesis of the quorum-sensing molecule autoinducer-2. Shows negligible activity with futalosine (FL) as substrate. The chain is Aminodeoxyfutalosine nucleosidase (pfs) from Campylobacter jejuni subsp. jejuni serotype O:2 (strain ATCC 700819 / NCTC 11168).